The chain runs to 96 residues: Co-chaperonin GroES (96 aa).

Belongs to the GroES chaperonin family. Heptamer of 7 subunits arranged in a ring. Interacts with the chaperonin GroEL.

The protein resides in the cytoplasm. Together with the chaperonin GroEL, plays an essential role in assisting protein folding. The GroEL-GroES system forms a nano-cage that allows encapsulation of the non-native substrate proteins and provides a physical environment optimized to promote and accelerate protein folding. GroES binds to the apical surface of the GroEL ring, thereby capping the opening of the GroEL channel. The sequence is that of Co-chaperonin GroES from Hydrogenobaculum sp. (strain Y04AAS1).